The chain runs to 31 residues: Cytochrome b6-f complex subunit 6 (31 aa).

A helical transmembrane segment spans residues Ile4–Gly24.

It belongs to the PetL family. As to quaternary structure, the 4 large subunits of the cytochrome b6-f complex are cytochrome b6, subunit IV (17 kDa polypeptide, PetD), cytochrome f and the Rieske protein, while the 4 small subunits are PetG, PetL, PetM and PetN. The complex functions as a dimer.

The protein resides in the plastid. The protein localises to the chloroplast thylakoid membrane. Functionally, component of the cytochrome b6-f complex, which mediates electron transfer between photosystem II (PSII) and photosystem I (PSI), cyclic electron flow around PSI, and state transitions. PetL is important for photoautotrophic growth as well as for electron transfer efficiency and stability of the cytochrome b6-f complex. In Phaseolus vulgaris (Kidney bean), this protein is Cytochrome b6-f complex subunit 6.